The following is a 500-amino-acid chain: NAD(P)H-quinone oxidoreductase chain 4, chloroplastic (500 aa).

The next 14 membrane-spanning stretches (helical) occupy residues 4 to 24 (FPWLTIFVGLPISAGFLIFVF), 35 to 55 (YTIFICVLELLLMTYAFSYYF), 84 to 104 (GLSLGPILLTGFITTLATLAA), 113 to 133 (LFHFLMLAMYSGQIGLFSSQN), 134 to 154 (LLLFFIMWELELIPVYLLLAM), 167 to 187 (FILYTAGSSVFLLMGALGIAF), 211 to 231 (ILFYIGFLIAFAVKSPIIPLH), 242 to 262 (HYSTCMLLAGILLKMGAYGLV), 272 to 292 (AHSIFSSWLIIVGAIQIIYAA), 305 to 325 (IAYSSVSHMGFTIIGICSISD), 330 to 350 (GAILQIISHGFIGAALFFLSG), 386 to 406 (LALPGMSGFFAELVVFFGIIT), 416 to 436 (ILITFVTAVGTILTPIYLLSM), and 463 to 483 (FVSIAILLPVISIGIYPDFVF).

The protein belongs to the complex I subunit 4 family.

It localises to the plastid. The protein localises to the chloroplast thylakoid membrane. The catalysed reaction is a plastoquinone + NADH + (n+1) H(+)(in) = a plastoquinol + NAD(+) + n H(+)(out). It carries out the reaction a plastoquinone + NADPH + (n+1) H(+)(in) = a plastoquinol + NADP(+) + n H(+)(out). The protein is NAD(P)H-quinone oxidoreductase chain 4, chloroplastic of Populus trichocarpa (Western balsam poplar).